Here is a 208-residue protein sequence, read N- to C-terminus: Probable GTP-binding protein EngB (208 aa).

The EngB-type G domain maps to 23–205 (LTSEMVILGR…RQTLLKYLLT (183 aa)). GTP-binding positions include 31–38 (GRSNVGKS), 57–61 (GKTRL), 84–87 (DLPG), 154–157 (TKFD), and 182–184 (FNA). Positions 38 and 59 each coordinate Mg(2+).

Belongs to the TRAFAC class TrmE-Era-EngA-EngB-Septin-like GTPase superfamily. EngB GTPase family. Requires Mg(2+) as cofactor.

Its function is as follows. Necessary for normal cell division and for the maintenance of normal septation. The sequence is that of Probable GTP-binding protein EngB from Helicobacter pylori (strain Shi470).